An 85-amino-acid polypeptide reads, in one-letter code: Latartoxin-1a (85 aa).

An N-terminal signal peptide occupies residues 1-19 (MKVLVFAIVCSVLLQVVLS). The propeptide at 20-25 (ADEEAR) is removed in mature form. Positions 22-25 (EEAR) match the Processing quadruplet motif motif. 4 disulfides stabilise this stretch: C27–C42, C34–C47, C41–C64, and C49–C62.

Belongs to the neurotoxin 19 (CSTX) family. Contains 4 disulfide bonds. In terms of processing, cleavage of the propeptide depends on the processing quadruplet motif (XXXR, with at least one of X being E). Expressed by the venom gland.

It localises to the secreted. In terms of biological role, insect toxin. Causes paralysis in larvae of C.vicina by depolarizing membranes at the neuromuscular junction. The polypeptide is Latartoxin-1a (Lachesana tarabaevi (Spider)).